A 2629-amino-acid chain; its full sequence is Protein DOP1 homolog (2629 aa).

Disordered stretches follow at residues 561 to 584 (NKGV…SRLN), 605 to 652 (SASN…TPRS), 688 to 710 (AGNV…PQFY), 1278 to 1340 (MDES…SSSA), 1371 to 1395 (TYRL…QTEH), 1435 to 1471 (ISKT…ATDS), and 1766 to 1785 (RQDT…SPTR). Composition is skewed to polar residues over residues 605 to 615 (SASNQSVGRQS) and 636 to 647 (ASDTGQQSSSDL). Residues 1307-1320 (DITDNSDSSDFESD) are compositionally biased toward acidic residues. Residues 1321–1333 (SELRETSLEKEDS) show a composition bias toward basic and acidic residues. Composition is skewed to polar residues over residues 1381–1391 (GENSLNSVATD) and 1435–1450 (ISKT…SCSQ).

It belongs to the DOP1 family.

The protein resides in the golgi apparatus membrane. Functionally, may be involved in protein traffic between late Golgi and early endosomes. The protein is Protein DOP1 homolog of Drosophila pseudoobscura pseudoobscura (Fruit fly).